We begin with the raw amino-acid sequence, 369 residues long: 3-isopropylmalate dehydrogenase (369 aa).

77-90 (GPKWDDLPFDKKPE) contributes to the NAD(+) binding site. Residues R97, R107, R135, and D226 each contribute to the substrate site. Residues D226, D250, and D254 each coordinate Mg(2+). 289–301 (GSAPDIAGKDMAN) contacts NAD(+).

The protein belongs to the isocitrate and isopropylmalate dehydrogenases family. LeuB type 1 subfamily. Homodimer. It depends on Mg(2+) as a cofactor. Requires Mn(2+) as cofactor.

The protein resides in the cytoplasm. It catalyses the reaction (2R,3S)-3-isopropylmalate + NAD(+) = 4-methyl-2-oxopentanoate + CO2 + NADH. Its pathway is amino-acid biosynthesis; L-leucine biosynthesis; L-leucine from 3-methyl-2-oxobutanoate: step 3/4. Its function is as follows. Catalyzes the oxidation of 3-carboxy-2-hydroxy-4-methylpentanoate (3-isopropylmalate) to 3-carboxy-4-methyl-2-oxopentanoate. The product decarboxylates to 4-methyl-2 oxopentanoate. This Paramagnetospirillum magneticum (strain ATCC 700264 / AMB-1) (Magnetospirillum magneticum) protein is 3-isopropylmalate dehydrogenase.